The sequence spans 682 residues: DNA ligase (682 aa).

NAD(+) is bound by residues 42–46 (DAEYD), 91–92 (SL), and E124. The active-site N6-AMP-lysine intermediate is the K126. The NAD(+) site is built by R147, E184, K302, and K326. Residues C420, C423, C438, and C444 each coordinate Zn(2+). The region spanning 603–682 (IADNPLKGKS…QEFIALTGEN (80 aa)) is the BRCT domain.

The protein belongs to the NAD-dependent DNA ligase family. LigA subfamily. It depends on Mg(2+) as a cofactor. The cofactor is Mn(2+).

It carries out the reaction NAD(+) + (deoxyribonucleotide)n-3'-hydroxyl + 5'-phospho-(deoxyribonucleotide)m = (deoxyribonucleotide)n+m + AMP + beta-nicotinamide D-nucleotide.. In terms of biological role, DNA ligase that catalyzes the formation of phosphodiester linkages between 5'-phosphoryl and 3'-hydroxyl groups in double-stranded DNA using NAD as a coenzyme and as the energy source for the reaction. It is essential for DNA replication and repair of damaged DNA. This Actinobacillus pleuropneumoniae serotype 7 (strain AP76) protein is DNA ligase.